We begin with the raw amino-acid sequence, 736 residues long: MKKSRSVMAVTADDNLKDYFECSLSKSYSSSSYTLGIDLWRGRRCCSGNLQLPPLSQRQSERARTPEGDGISRPTTLPLTTLPSIAITTVSQECFDVENGPSPGRSPLDPQASSSSGLVLHAAFPGHSQRRESFLYRSDSDYDLSPKAMSRNSSLPSEQHGDDLIVTPFAQVLASLRIVRNNFTLLTNLHGAPNKRSPAASQAPVTRVSLQEESYQKLAMETLEELDWCLDQLETIQTYRSVSEMASNKFKRMLNRELTHLSEMSRSGNQVSEYISNTFLDKQNDVEIPSPTQKDREKKKKQQLMTQISGVKKLMHSSSLNNTSISRFGVNTENEDHLAKELEDLNKWGLNIFNVAGYSHNRPLTCIMYAIFQERDLLKTFKISSDTFVTYMMTLEDHYHSDVAYHNSLHAADVAQSTHVLLSTPALDAVFTDLEILAAIFAAAIHDVDHPGVSNQFLINTNSELALMYNDESVLENHHLAVGFKLLQEEHCDIFQNLTKKQRQTLRKMVIDMVLATDMSKHMSLLADLKTMVETKKVTSSGVLLLDNYTDRIQVLRNMVHCADLSNPTKSLELYRQWTDRIMEEFFQQGDKERERGMEISPMCDKHTASVEKSQVGFIDYIVHPLWETWADLVQPDAQDILDTLEDNRNWYQSMIPQSPSPPLDERSRDCQGLMEKFQFELTLEEEDSEGPEKEGEGPNYFSSTKTLCVIDPENRDSLEETDIDIATEDKSLIDT.

Disordered stretches follow at residues Gln-51–Leu-77 and Asp-96–Ser-116. Ser-56 bears the Phosphoserine mark. Ser-290 is subject to Phosphoserine. Residues Val-330 to Ser-659 form the PDEase domain. The active-site Proton donor is His-406. His-406 contacts 3',5'-cyclic AMP. Positions 406 and 410 each coordinate AMP. Residues His-410, His-446, Asp-447, and Asp-564 each coordinate Zn(2+). Residues Asp-447, Asp-564, Gln-615, and Phe-618 each coordinate AMP. Asp-447 contributes to the Mg(2+) binding site. Residue Asp-447 participates in Mn(2+) binding. 3',5'-cyclic AMP is bound by residues Gln-615 and Phe-618. Ser-659 and Ser-661 each carry phosphoserine. A disordered region spans residues Glu-685–Thr-736.

This sequence belongs to the cyclic nucleotide phosphodiesterase family. PDE4 subfamily. Interacts with DISC1. Zn(2+) is required as a cofactor. Requires Mg(2+) as cofactor. Mn(2+) serves as cofactor. In terms of tissue distribution, widely expressed. As to expression, expressed in brain, heart, lung and liver. Expressed in liver and brain.

The protein resides in the cytoplasm. Its subcellular location is the cell membrane. The enzyme catalyses 3',5'-cyclic AMP + H2O = AMP + H(+). It functions in the pathway purine metabolism; 3',5'-cyclic AMP degradation; AMP from 3',5'-cyclic AMP: step 1/1. Inhibited by rolipram. Hydrolyzes the second messenger cAMP, which is a key regulator of many important physiological processes. In Rattus norvegicus (Rat), this protein is 3',5'-cyclic-AMP phosphodiesterase 4B.